The primary structure comprises 122 residues: Large ribosomal subunit protein uL14 (122 aa).

The protein belongs to the universal ribosomal protein uL14 family. In terms of assembly, part of the 50S ribosomal subunit. Forms a cluster with proteins L3 and L19. In the 70S ribosome, L14 and L19 interact and together make contacts with the 16S rRNA in bridges B5 and B8.

Functionally, binds to 23S rRNA. Forms part of two intersubunit bridges in the 70S ribosome. This chain is Large ribosomal subunit protein uL14, found in Mesorhizobium japonicum (strain LMG 29417 / CECT 9101 / MAFF 303099) (Mesorhizobium loti (strain MAFF 303099)).